Reading from the N-terminus, the 289-residue chain is Phospholipase A1 (289 aa).

The first 20 residues, 1-20, serve as a signal peptide directing secretion; sequence MRAILRGLLPATLLPLAAYA. The Periplasmic portion of the chain corresponds to 21-52; that stretch reads QEATIKEVHDAPAVRGSIIANMLQEHDNPFTL. Residues 53–65 traverse the membrane as a beta stranded segment; that stretch reads YPYDTNYLIYTNT. Topologically, residues 66 to 84 are extracellular; that stretch reads SDLNKEAISTYNWSENARK. The beta stranded transmembrane segment at 85–99 threads the bilayer; the sequence is DEVKFQLSLAFPLWR. Residues 100-105 lie on the Periplasmic side of the membrane; sequence GILGPN. A beta stranded membrane pass occupies residues 106–118; it reads SVLGASYTQKSWW. Over 119–128 the chain is Extracellular; it reads QLSNSKESSP. S126 is a binding site for Ca(2+). A beta stranded transmembrane segment spans residues 129–148; the sequence is FRETNYEPQLFLGFATDYRF. Residues 149 to 150 lie on the Periplasmic side of the membrane; it reads AG. A beta stranded membrane pass occupies residues 151–164; sequence WTLRDVEMGYNHDS. The active-site Proton acceptor is H162. The active-site Nucleophile is the S164. Residues 165–173 are Extracellular-facing; the sequence is NGRSDPTSR. Residues R167 and S172 each coordinate Ca(2+). Residues 174-186 form a beta stranded membrane-spanning segment; that stretch reads SWNRLYTRLMAEN. Residues 187-188 are Periplasmic-facing; that stretch reads GN. Residues 189-198 traverse the membrane as a beta stranded segment; it reads WLVEVKPWYV. The Extracellular segment spans residues 199-216; sequence IGSTDDNPDITKYMGYYQ. D204 lines the Ca(2+) pocket. A beta stranded transmembrane segment spans residues 217–223; the sequence is LKIGYHL. The Periplasmic portion of the chain corresponds to 224–225; the sequence is GE. The beta stranded transmembrane segment at 226–234 threads the bilayer; that stretch reads AVLSAKGQY. Residues 235–241 are Extracellular-facing; the sequence is NWNTGYG. The beta stranded transmembrane segment at 242 to 250 threads the bilayer; sequence GAEVGLSYP. Over 251 to 255 the chain is Periplasmic; sequence VTKHV. A beta stranded transmembrane segment spans residues 256-265; that stretch reads RLYTQVYSGY. At 266 to 274 the chain is on the extracellular side; sequence GESLIDYNF. Residues 275–286 traverse the membrane as a beta stranded segment; the sequence is NQTRVGVGVMLN. The Periplasmic segment spans residues 287 to 289; the sequence is DIF.

Belongs to the phospholipase A1 family. As to quaternary structure, homodimer; dimerization is reversible, and the dimeric form is the active one. It depends on Ca(2+) as a cofactor.

It is found in the cell outer membrane. It carries out the reaction a 1,2-diacyl-sn-glycero-3-phosphocholine + H2O = a 2-acyl-sn-glycero-3-phosphocholine + a fatty acid + H(+). The enzyme catalyses a 1,2-diacyl-sn-glycero-3-phosphocholine + H2O = a 1-acyl-sn-glycero-3-phosphocholine + a fatty acid + H(+). Functionally, hydrolysis of phosphatidylcholine with phospholipase A2 (EC 3.1.1.4) and phospholipase A1 (EC 3.1.1.32) activities. This Salmonella typhi protein is Phospholipase A1 (pldA).